We begin with the raw amino-acid sequence, 645 residues long: Aspartate--tRNA ligase, mitochondrial (645 aa).

Residues 1–47 (MYFPSWLSQLYRGLSRPIRRTTQPIWGSLYRSLLQSSQRRIPEFSSF) constitute a mitochondrion transit peptide. A Phosphothreonine modification is found at Thr-219. Residue Ser-242 is modified to Phosphoserine. The aspartate stretch occupies residues 244–247 (QQFK). L-aspartate is bound at residue Arg-266. Residue 266-268 (RDE) coordinates ATP. N6-acetyllysine is present on Lys-382. Residue Glu-535 participates in ATP binding. Arg-542 contacts L-aspartate. 584–587 (GLDR) lines the ATP pocket.

Belongs to the class-II aminoacyl-tRNA synthetase family. Type 1 subfamily. In terms of assembly, homodimer.

It localises to the mitochondrion matrix. Its subcellular location is the mitochondrion membrane. It catalyses the reaction tRNA(Asp) + L-aspartate + ATP = L-aspartyl-tRNA(Asp) + AMP + diphosphate. Functionally, catalyzes the attachment of aspartate to tRNA(Asp) in a two-step reaction: aspartate is first activated by ATP to form Asp-AMP and then transferred to the acceptor end of tRNA(Asp). The sequence is that of Aspartate--tRNA ligase, mitochondrial (DARS2) from Homo sapiens (Human).